We begin with the raw amino-acid sequence, 305 residues long: UDP-3-O-acyl-N-acetylglucosamine deacetylase (305 aa).

Zn(2+) is bound by residues His-78, His-235, and Asp-239. His-262 functions as the Proton donor in the catalytic mechanism.

This sequence belongs to the LpxC family. It depends on Zn(2+) as a cofactor.

It carries out the reaction a UDP-3-O-[(3R)-3-hydroxyacyl]-N-acetyl-alpha-D-glucosamine + H2O = a UDP-3-O-[(3R)-3-hydroxyacyl]-alpha-D-glucosamine + acetate. Its pathway is glycolipid biosynthesis; lipid IV(A) biosynthesis; lipid IV(A) from (3R)-3-hydroxytetradecanoyl-[acyl-carrier-protein] and UDP-N-acetyl-alpha-D-glucosamine: step 2/6. Functionally, catalyzes the hydrolysis of UDP-3-O-myristoyl-N-acetylglucosamine to form UDP-3-O-myristoylglucosamine and acetate, the committed step in lipid A biosynthesis. In Geobacter sp. (strain M21), this protein is UDP-3-O-acyl-N-acetylglucosamine deacetylase.